We begin with the raw amino-acid sequence, 187 residues long: UPF0301 protein VF_0434 (187 aa).

It belongs to the UPF0301 (AlgH) family.

The polypeptide is UPF0301 protein VF_0434 (Aliivibrio fischeri (strain ATCC 700601 / ES114) (Vibrio fischeri)).